The sequence spans 308 residues: Serpentine receptor class V-1 (308 aa).

Transmembrane regions (helical) follow at residues 15–35 (VSTA…YILF), 46–68 (PFFR…STFF), 88–108 (VVPI…IIFI), 135–155 (LLLI…STDF), 184–204 (AMVD…AIFI), 222–242 (LALS…CSLL), and 256–276 (TMWF…LLAL).

Belongs to the nematode receptor-like protein srv family.

The protein localises to the membrane. The polypeptide is Serpentine receptor class V-1 (srv-1) (Caenorhabditis elegans).